The primary structure comprises 197 residues: Ribonuclease HII (197 aa).

Residues 10–197 (ELIAGVDEVG…APVRKLLNTL (188 aa)) form the RNase H type-2 domain. A divalent metal cation is bound by residues Asp16, Glu17, and Asp108.

Belongs to the RNase HII family. It depends on Mn(2+) as a cofactor. Mg(2+) is required as a cofactor.

It is found in the cytoplasm. The enzyme catalyses Endonucleolytic cleavage to 5'-phosphomonoester.. Endonuclease that specifically degrades the RNA of RNA-DNA hybrids. In Pasteurella multocida (strain Pm70), this protein is Ribonuclease HII (rnhB).